The sequence spans 463 residues: Cis-zeatin O-glucosyltransferase 2 (463 aa).

The Proton acceptor role is filled by histidine 21. An anthocyanidin is bound by residues histidine 21 and asparagine 91. Aspartate 127 (charge relay) is an active-site residue. UDP-alpha-D-glucose is bound by residues alanine 339, glutamine 341, histidine 356, tryptophan 359, asparagine 360, serine 361, glutamate 364, aspartate 380, and glutamine 381.

It belongs to the UDP-glycosyltransferase family. In terms of tissue distribution, highly expressed in root. Expressed at much lower level in kernel. Weakly or not expressed in expressed in stems and leaves.

It carries out the reaction cis-zeatin + UDP-alpha-D-glucose = O-beta-D-glucosyl-cis-zeatin + UDP + H(+). Functionally, utilizes UDP-glucose as the sugar donor and catalyzes the formation of O-beta-D-glucosyl-cis-zeatin from cis-zeatin. May regulate active versus storage forms of cytokinins and could have an impact on seed growth. The protein is Cis-zeatin O-glucosyltransferase 2 of Zea mays (Maize).